Here is a 389-residue protein sequence, read N- to C-terminus: Acetate kinase (389 aa).

Residue N7 coordinates Mg(2+). An ATP-binding site is contributed by K14. R88 lines the substrate pocket. D145 functions as the Proton donor/acceptor in the catalytic mechanism. ATP is bound by residues 205 to 209 (HLGNG), 279 to 281 (DLR), and 324 to 328 (GIGEN). A Mg(2+)-binding site is contributed by E375.

Belongs to the acetokinase family. Homodimer. The cofactor is Mg(2+). It depends on Mn(2+) as a cofactor.

The protein resides in the cytoplasm. The catalysed reaction is acetate + ATP = acetyl phosphate + ADP. It functions in the pathway metabolic intermediate biosynthesis; acetyl-CoA biosynthesis; acetyl-CoA from acetate: step 1/2. In terms of biological role, catalyzes the formation of acetyl phosphate from acetate and ATP. Can also catalyze the reverse reaction. The chain is Acetate kinase from Sulfurimonas denitrificans (strain ATCC 33889 / DSM 1251) (Thiomicrospira denitrificans (strain ATCC 33889 / DSM 1251)).